The following is a 746-amino-acid chain: Steroid receptor seven-up, isoform A (746 aa).

Positions 38–191 (PPHSAWHEPP…HSQSSNSGSQ (154 aa)) are disordered. Positions 56–68 (AASAGPGTTTGSV) are enriched in low complexity. Residues 83–101 (QQSAVIKQDLSCPSLNQAG) show a composition bias toward polar residues. Gly residues predominate over residues 122–141 (GSAGGHHSGSGSGSGSGVNP). Polar residues predominate over residues 158-170 (MLTSIKGQPTGCG). The segment covering 171–191 (STTPSSQANSSHSQSSNSGSQ) has biased composition (low complexity). The segment at residues 197–272 (NIECVVCGDK…MGMRREAVQR (76 aa)) is a DNA-binding region (nuclear receptor). 2 NR C4-type zinc fingers span residues 200–220 (CVVC…CEGC) and 236–260 (CRGS…LKKC). One can recognise an NR LBD domain in the interval 307–556 (YLSSYISLLL…PLVPSAGSAF (250 aa)). A disordered region spans residues 579–645 (QATPPSSGGG…APAPVPTSSV (67 aa)). Positions 592-605 (GHNNSSGLGASLPT) are enriched in polar residues. Positions 606-645 (QSQSGSSSRNLTASPLSTSLATAPAPASASAPAPVPTSSV) are enriched in low complexity.

The protein belongs to the nuclear hormone receptor family. NR2 subfamily. In terms of tissue distribution, expressed in several embryonic tissues; dorsal vessel, oenocyte and fat body. CNS expression is dynamic and confined to temporally restricted subsections of the NB lineage; expressed in many NB and GMCs, but only a small number of neurons.

It localises to the nucleus. Receptor that is required in photoreceptors R1, R3, R4 and R6 during eye development; generation of the ganglion mother cell-2 (GMC-2) fate in the nb7-3 lineage, coinciding with the transition in the expression of HB to KR in the neuroblasts (NBs). This Drosophila melanogaster (Fruit fly) protein is Steroid receptor seven-up, isoform A (svp).